A 110-amino-acid polypeptide reads, in one-letter code: Phosphoribosyl-ATP pyrophosphatase (110 aa).

It belongs to the PRA-PH family.

Its subcellular location is the cytoplasm. It carries out the reaction 1-(5-phospho-beta-D-ribosyl)-ATP + H2O = 1-(5-phospho-beta-D-ribosyl)-5'-AMP + diphosphate + H(+). It functions in the pathway amino-acid biosynthesis; L-histidine biosynthesis; L-histidine from 5-phospho-alpha-D-ribose 1-diphosphate: step 2/9. This chain is Phosphoribosyl-ATP pyrophosphatase, found in Pseudomonas fluorescens (strain Pf0-1).